Consider the following 949-residue polypeptide: Coiled-coil domain-containing protein 80 (949 aa).

The first 27 residues, 1 to 27 (MTWKMGPHFTMLLAMWLVCGSASQSSA), serve as a signal peptide directing secretion. Disordered regions lie at residues 24 to 79 (QSSA…RRKS), 289 to 360 (HVVQ…ATRA), and 408 to 609 (GPSV…SPRK). The span at 295-305 (NNGGGGGGSTG) shows a compositional bias: gly residues. Residues 308 to 328 (SDKRKEDPRRTQIHPTREPPR) are compositionally biased toward basic and acidic residues. Low complexity predominate over residues 345-360 (RATTLPPAPVTTATRA). Basic and acidic residues predominate over residues 419–429 (PRKEQQREKPQ). Residues 436–453 (KATNYGSFTATPPTTLWE) show a composition bias toward polar residues. Over residues 463-477 (RFRDNRTDKREHGHQ) the composition is skewed to basic and acidic residues. Asn-467 carries N-linked (GlcNAc...) asparagine glycosylation. Residues 487 to 498 (KPIKGKLPKKKE) are compositionally biased toward basic residues. Basic and acidic residues-rich tracts occupy residues 499–511 (KILS…KYDL), 534–548 (KESK…PEKE), and 556–581 (AKPD…EKEK). Glycyl lysine isopeptide (Lys-Gly) (interchain with G-Cter in SUMO2) cross-links involve residues Lys-544 and Lys-547. Residues 559–587 (DKLLRSEKQMKKAEKKSKQEKEKTKKKKA) adopt a coiled-coil conformation.

This sequence belongs to the CCDC80 family. Binds to various extracellular matrix proteins. Post-translationally, phosphorylated. Isoform 2 is expressed in uterus, liver, lung, spleen, kidney, heart, bladder, skeletal muscle and brain (at protein level). Isoform 2 is expressed very low in mammary gland and intestine (at protein level). Isoform 2 is expressed in lactating mammary glands and mammary tumors (at protein level). Ubiquitous (isoform 1). Isoform 2 is expressed in ovary, uterus, mammary glands, liver, lung, spleen, kidney, heart, bladder, intestine, skeletal muscle and brain.

It is found in the secreted. It localises to the extracellular space. Its subcellular location is the extracellular matrix. Promotes cell adhesion and matrix assembly. The chain is Coiled-coil domain-containing protein 80 (Ccdc80) from Rattus norvegicus (Rat).